An 849-amino-acid polypeptide reads, in one-letter code: MEFRKPFKSHSSYKQIISTGDQNEKTKKKKKLANLDDGDIAKTQSSGSSFDGNSYKFWQDIATDDYTKSGSFDFPQYREEITLDVNEETEETEDVSNNNNLSGSKETRVFFKINSSGTNNMSGSVRSCTSSTSFSSATMRLNLEQQLEDEGEVVVRCSSVRKTELVSRAKARSRLIDPPQEEEQQYSSWIGTSDQLRSGLLGRHSDDIEEEDDSSAEEDVPVEYRKLKMDAITLLQWMSLIALVVALVLSLGLHTWRNATLWSLHLWKWEVVLLVLICGRLVSGCGIRIIVFFIERNFLLRKRVLYFVYGVKTAVQNCLWLGLVLLAWHFLFDKKVEKETQSDVLLLMSKILVCFLLSTVLWLIKTLVVKVLASSFHVSTYFDRIQEALFHHYLIETLSGPPMLELSRIEEEEDRTQDEIYKMQKGGADLSPELCSAAFPQEKSGSTMNMKFSPIIPKTGSDNGITMDDLHKMNQKNVSAWNMKRLMKIVRNVSLSTLDEQALQNTCEDESTRQIRSEKEAKAAARKIFKNVAQPGTKHIYLEDLMRFLRVDEAMKTMCLFEGALVTKKITKSALKNWLVNAFRERRALALTLNDTKTAVNKLHHMISFLTAIVIIVIWLILLEIATSKYLLFLTSQVVLLAFMFGNSLKTVFESIIFLFIIHPYDVGDRLLIDTVEMVVEEMNILTTVFLRADNLKIVYPNILLWQKAIHNYNRSPDMGDEVTCCVHITTPPEKIAAIKQRISSYIDSKPEYWYPKADVIVKDVEDLNIVRIAIWLCHKINHQNMGERFTRRALLIEEVIKILLELDIQYRFHPLDINVKTMPTVVSSRVPPAWSQNPDLRRIILLEC.

A disordered region spans residues 1–49; sequence MEFRKPFKSHSSYKQIISTGDQNEKTKKKKKLANLDDGDIAKTQSSGSS. A compositionally biased stretch (polar residues) spans 9–21; that stretch reads SHSSYKQIISTGD. The next 6 helical transmembrane spans lie at 231–251, 274–294, 313–333, 344–364, 606–626, and 642–662; these read AITL…VLSL, LVLI…VFFI, TAVQ…FLFD, VLLL…LWLI, MISF…LEIA, and AFMF…LFII.

The protein belongs to the MscS (TC 1.A.23) family.

The protein resides in the membrane. Functionally, mechanosensitive channel that opens in response to stretch forces in the membrane lipid bilayer. This is Mechanosensitive ion channel protein 7 (MSL7) from Arabidopsis thaliana (Mouse-ear cress).